The primary structure comprises 406 residues: tRNA-specific 2-thiouridylase MnmA (406 aa).

Residues 42-49 (GLSGGVDS) and Leu-68 contribute to the ATP site. The active-site Nucleophile is Cys-129. Cys-129 and Cys-239 are joined by a disulfide. Residue Gly-154 coordinates ATP. The segment at 189-191 (KDQ) is interaction with tRNA. The active-site Cysteine persulfide intermediate is Cys-239. An interaction with tRNA region spans residues 344-345 (RY).

The protein belongs to the MnmA/TRMU family.

It localises to the cytoplasm. It catalyses the reaction S-sulfanyl-L-cysteinyl-[protein] + uridine(34) in tRNA + AH2 + ATP = 2-thiouridine(34) in tRNA + L-cysteinyl-[protein] + A + AMP + diphosphate + H(+). In terms of biological role, catalyzes the 2-thiolation of uridine at the wobble position (U34) of tRNA, leading to the formation of s(2)U34. In Prochlorococcus marinus (strain SARG / CCMP1375 / SS120), this protein is tRNA-specific 2-thiouridylase MnmA.